The sequence spans 276 residues: Pantothenate synthetase (276 aa).

26–33 is a binding site for ATP; it reads MGFLHEGH. The active-site Proton donor is His-33. (R)-pantoate is bound at residue Gln-57. Gln-57 serves as a coordination point for beta-alanine. 142 to 145 serves as a coordination point for ATP; it reads GLKD. Gln-148 lines the (R)-pantoate pocket. ATP contacts are provided by residues Ile-171 and 179-182; that span reads KSSR.

The protein belongs to the pantothenate synthetase family. As to quaternary structure, homodimer.

Its subcellular location is the cytoplasm. It carries out the reaction (R)-pantoate + beta-alanine + ATP = (R)-pantothenate + AMP + diphosphate + H(+). Its pathway is cofactor biosynthesis; (R)-pantothenate biosynthesis; (R)-pantothenate from (R)-pantoate and beta-alanine: step 1/1. In terms of biological role, catalyzes the condensation of pantoate with beta-alanine in an ATP-dependent reaction via a pantoyl-adenylate intermediate. This Exiguobacterium sibiricum (strain DSM 17290 / CCUG 55495 / CIP 109462 / JCM 13490 / 255-15) protein is Pantothenate synthetase.